Consider the following 2290-residue polypeptide: MKRHQFKSWIFELREILREIKNSHYFLDSWIKFDSVGSFTHIFFHQERFMKLFDPRIWSILLSRDSQGATSNRYFTIKGLVLLVVVVLLSRINNRKMVERKNLYLMGLLPIPMNSIGPRKETLEESFWSSNRNRLIVSLLYLPKGKKISESCFMDPQESTWVIPIKKKRIMPESNRGSRWWRNRIGKKRDSSCQISNETIAGIEISFKEKDSKYLEFLFLSYTDDPIRKDHDWELFDRLSPRKKRNIINLNSGQLFEILGKDLICYLMSAFREKRPIQGESFFKQQGAGATMQSNDIEHVSHLFSRNKWGLSLQNCAQFHMWQFRQDLFVSWGKNQHESDFLRNVSRENWIWLDNVWLVNKDRFFSKVRNVLSNIQYDSTRSIFVQVTDSSQWKGSSSDQSRDHFDSVRNENSEYHTLIDQTEIQQLKERSILWDPSFLQTERTEIESDRFPKCLFGSSSMSWLFTEPEKRMNNHLLPEEIEEFLGNPTRSIRSFFSDRWSELHLGSNPTERSTRDHKLLKKKQDVSFVPSRRAEKKEMVDIFKIITYLQDTVSIHPSEPYHIPDLVPKDEPDMDSSNKISFLNKNPFFDFFHLFHDRNKGGYALRHDFFESEERFPEMADLFTLSITEPDLVFHRGFAFYIDSYGLDQKRFLNEVFNSRDESKKKLVLPPLFYEENESFSRRIRKKSVRIYCGNELEDPKLKTAVFASNNIMEAVNQYRLIRNLQYYGYIRNVSNRFFLMNRSDRNFEYGIQRDQIGNDTLNHITIMKYTINQHLSNLKKSQKKWFDPLISRTERSMNQDPDAYRYKGSDGSKNFQEHLEHFVSEQKNPFQVVQVVFDQLRIHQYSIDWSEVIDKEDLSKSLRFFLSKSLLFLSKSLRFFLSKSLPFFFVSIGNIPIHRSEIRIYELKGPNDQLCNQLLESIGVQIVHLKKLKPFLLDDHDTSQRPKFLINGGTILPFLFKKIPKRVIDSFHTRKNRRKSFDNTDSYFSMISHDRDNWLNPVKAFHRSSLISSFYKANRLRFLNDPHHFWFYCNKRFPFDVEKTRINNYDLTYGQFLNILSIRNKIFSLCVGKKGSLFLERETLSPIESQVSDIFIPNDFPQSGDETYNLYKLYKSFHFPIRSDPFVRGAIYSIADISATPLTEEQIVNLEKTYCQPLSDMNLSDSEGNNLHQYLSFNSNMGLIHTPCSEKYLPSGKRKKRSLCLKKCVEKGQMYRTFQRDSAFSNLSKWNLFQTYMPWFLTSTGCKYLNFTLLDTLSNPLPILSSSQKFVSIFHDMMHGSDISWPIPQKILPQWTLISEISSQCLQNLLLSEEMIHRNNESPVPLIWAHLRSTNAREFLYSIFFLLLVAGYLVRIHLLFVSRASSELQTELEKIKSLMIPSYMMEFRKLLDRYPTSELNPFWLKNLFLVVLEQLGDSLGEIRGSASGGNMLLGGGPAYGVKSIRSKKKYWKINLIDLVSIIPNPINRIIFSRNTRHLSRTSKEIYSLIRKRKNVNGDWIDDKIEFWVANSDSIDDEEREFLVQFSALTTEKRIDQILLSLTHSDHLSKNDSGYQMIEQPGSISLRYLVDIHQKDLMNYEFNRSCLAERRIFLAHYHTITYSQTLCGANIFHSPSPHGKPFSLRLALSPSRGILVIGSIGTGRSCLVKYLATNSYVPFITVFPNKFLDDKPKGYPIDDIDIDDSDDIDDSNDDLDIDKELLTMTNVLTMYMTTKIDRFDITLQFELAKAMSPCIIWIPNIHDLHVNESNYLSLDLLENYLSRDCERCSTGKILVIASTHIPQKVDPALIAPNKLNTCIKIRRLLLPQQLKHFFILSYTRGFHLEKKMFHTNGFGSITMGSNARDLVALINEALSISITQKKSIIETNTIRSALHRKTWDFRSQIRSVQDHGILFYQIGRAVTQNVLLSNCPIDPISIYMKKKSCKGGDSYLYKWYFELGTSMKKLTILLYLLSCSAGSVAQDLWSSSRHDEKNWITSYGFVENDSDLVHGLLLLLLLEVEGALALAGSSRTEKDCSQFDNNRVTLLLRSEPRNQLDMMQNGSCSIVDQRFLYEKYESEFEEGEGALDPQQIEEDLFNHIVWAPRIWRFDCIERPTELGFPYWTGSFRGKWIIYHKEGELQENDSEFLQSGTMQYQTRDRSSKEQGFFRTSQFIWDPADPSFSLFKDQPSVSVFSRREFFADEEMSKGLIASQTNPPTSIYKRWFIKNTQEKHFELLIHRQRWFRTNSSLSNGSFRSNTLSESYQYLSNLFLSNGTLLDQMTKTLLRKRWLFPDEMKHLIHVTGERFPIP.

1638-1645 (GSIGTGRS) is an ATP binding site.

This sequence belongs to the Ycf2 family.

It is found in the plastid. The protein resides in the chloroplast stroma. Its function is as follows. Probable ATPase of unknown function. Its presence in a non-photosynthetic plant (Epifagus virginiana) and experiments in tobacco indicate that it has an essential function which is probably not related to photosynthesis. The chain is Protein Ycf2 from Phalaenopsis aphrodite subsp. formosana (Moth orchid).